The sequence spans 430 residues: 2-deoxy-scyllo-inosose synthase (430 aa).

NAD(+)-binding positions include Asp-42, 73 to 76, 105 to 109, 129 to 130, 140 to 142, and 151 to 152; these read EVHK, GVTGN, TT, SLK, and KN. Lys-142 is a catalytic residue. Residue Glu-184 participates in Co(2+) binding. The active site involves Glu-244. His-247 and His-263 together coordinate Co(2+). The tract at residues 371 to 430 is disordered; sequence RGGAGGGAAEPAAARTGPVPDGPEAAVPATPGPVPAGPAAAAPLPSGPAPTAPAAAGPVP. Low complexity predominate over residues 379–399; it reads AEPAAARTGPVPDGPEAAVPA.

Belongs to the sugar phosphate cyclases superfamily. DOI synthase family. The cofactor is NAD(+). Requires Co(2+) as cofactor.

It carries out the reaction D-glucose 6-phosphate = 2-deoxy-L-scyllo-inosose + phosphate. It functions in the pathway metabolic intermediate biosynthesis; 2-deoxystreptamine biosynthesis; 2-deoxystreptamine from D-glucose 6-phosphate: step 1/4. It participates in antibiotic biosynthesis; neomycin biosynthesis. In terms of biological role, catalyzes the intramolecular carbocycle formation from D-glucose-6-phosphate to 2-deoxy-scyllo-inosose (DOI). In Streptomyces fradiae (Streptomyces roseoflavus), this protein is 2-deoxy-scyllo-inosose synthase (neoC).